The chain runs to 240 residues: Acyl-coenzyme A thioesterase THEM4 (240 aa).

Residues 1-36 (MLRSCAARLRTLGALCLPPVGRRLPGSEPRPELRSF) constitute a mitochondrion transit peptide. Phosphoserine occurs at positions 37 and 38. 2 positions are modified to N6-succinyllysine: Lys-55 and Lys-66. N6-acetyllysine is present on Lys-74. Position 98 is an N6-succinyllysine (Lys-98). Residue Asp-161 is the Proton donor/acceptor of the active site. Residues Asn-183, Lys-185, and 206–207 (RK) each bind substrate. The residue at position 207 (Lys-207) is an N6-succinyllysine.

The protein belongs to the THEM4/THEM5 thioesterase family. As to quaternary structure, homodimer and homotetramer. Interacts with AKT1 in the cytosol. In terms of processing, phosphorylated. Expressed predominantly in skeletal muscle, testis, uterus, brain and kidney. Down-regulated in glioblastoma or glioma compared to non-neoplastic brain due to promoter hypermethylation.

It is found in the cell membrane. The protein localises to the cell projection. Its subcellular location is the ruffle membrane. The protein resides in the cytoplasm. It localises to the mitochondrion. It is found in the mitochondrion inner membrane. The protein localises to the mitochondrion intermembrane space. It carries out the reaction hexadecanoyl-CoA + H2O = hexadecanoate + CoA + H(+). It catalyses the reaction octanoyl-CoA + H2O = octanoate + CoA + H(+). The enzyme catalyses decanoyl-CoA + H2O = decanoate + CoA + H(+). The catalysed reaction is dodecanoyl-CoA + H2O = dodecanoate + CoA + H(+). It carries out the reaction tetradecanoyl-CoA + H2O = tetradecanoate + CoA + H(+). It catalyses the reaction (9Z)-octadecenoyl-CoA + H2O = (9Z)-octadecenoate + CoA + H(+). The enzyme catalyses (5Z,8Z,11Z,14Z)-eicosatetraenoyl-CoA + H2O = (5Z,8Z,11Z,14Z)-eicosatetraenoate + CoA + H(+). Has acyl-CoA thioesterase activity towards medium and long-chain (C14 to C18) fatty acyl-CoA substrates, and probably plays a role in mitochondrial fatty acid metabolism. Plays a role in the apoptotic process, possibly via its regulation of AKT1 activity. According to PubMed:11598301, inhibits AKT1 phosphorylation and activity. According to PubMed:17615157, enhances AKT1 activity by favoring its phosphorylation and translocation to plasma membrane. In Homo sapiens (Human), this protein is Acyl-coenzyme A thioesterase THEM4 (THEM4).